Here is a 248-residue protein sequence, read N- to C-terminus: Ubiquinone/menaquinone biosynthesis C-methyltransferase UbiE (248 aa).

S-adenosyl-L-methionine contacts are provided by serine 68 and aspartate 92.

The protein belongs to the class I-like SAM-binding methyltransferase superfamily. MenG/UbiE family.

It catalyses the reaction a 2-demethylmenaquinol + S-adenosyl-L-methionine = a menaquinol + S-adenosyl-L-homocysteine + H(+). The enzyme catalyses a 2-methoxy-6-(all-trans-polyprenyl)benzene-1,4-diol + S-adenosyl-L-methionine = a 5-methoxy-2-methyl-3-(all-trans-polyprenyl)benzene-1,4-diol + S-adenosyl-L-homocysteine + H(+). The protein operates within quinol/quinone metabolism; menaquinone biosynthesis; menaquinol from 1,4-dihydroxy-2-naphthoate: step 2/2. It functions in the pathway cofactor biosynthesis; ubiquinone biosynthesis. Functionally, methyltransferase required for the conversion of demethylmenaquinol (DMKH2) to menaquinol (MKH2) and the conversion of 2-polyprenyl-6-methoxy-1,4-benzoquinol (DDMQH2) to 2-polyprenyl-3-methyl-6-methoxy-1,4-benzoquinol (DMQH2). This Rickettsia rickettsii (strain Iowa) protein is Ubiquinone/menaquinone biosynthesis C-methyltransferase UbiE.